We begin with the raw amino-acid sequence, 461 residues long: Photosystem II CP43 reaction center protein (461 aa).

A propeptide spanning residues 1 to 2 (ME) is cleaved from the precursor. Position 3 is an N-acetylthreonine (threonine 3). Threonine 3 is modified (phosphothreonine). The next 5 helical transmembrane spans lie at 57–81 (LFEVAHFVPQKPMYEQGLILLPHLA), 122–143 (LAGPDTLEESFRFFGYTWKRKK), 166–188 (KAMYGGGVYDTWWPGGGDVRSIT), 243–263 (RPSPWVVRTFVWSGEAYLSYS), and 279–300 (WFNNTVYPSEFYGPTGPEASQA). Glutamate 355 is a [CaMn4O5] cluster binding site. A helical membrane pass occupies residues 435–459 (RARAAAIGFEKGIDRSREIARKLKP).

This sequence belongs to the PsbB/PsbC family. PsbC subfamily. As to quaternary structure, PSII is composed of 1 copy each of membrane proteins PsbA, PsbB, PsbC, PsbD, PsbE, PsbF, PsbH, PsbI, PsbJ, PsbK, PsbL, PsbM, PsbT, PsbY, PsbZ, Psb30/Ycf12, at least 3 peripheral proteins of the oxygen-evolving complex and a large number of cofactors. It forms dimeric complexes. Binds multiple chlorophylls and provides some of the ligands for the Ca-4Mn-5O cluster of the oxygen-evolving complex. It may also provide a ligand for a Cl- that is required for oxygen evolution. PSII binds additional chlorophylls, carotenoids and specific lipids. serves as cofactor.

It localises to the plastid. The protein localises to the chloroplast thylakoid membrane. Its function is as follows. One of the components of the core complex of photosystem II (PSII). It binds chlorophyll and helps catalyze the primary light-induced photochemical processes of PSII. PSII is a light-driven water:plastoquinone oxidoreductase, using light energy to abstract electrons from H(2)O, generating O(2) and a proton gradient subsequently used for ATP formation. The sequence is that of Photosystem II CP43 reaction center protein from Euglena gracilis.